The sequence spans 372 residues: Flap endonuclease 1 (372 aa).

Residues 1–105 are N-domain; that stretch reads MGVKGLNQLI…GELEKRLLRR (105 aa). Asp34 is a binding site for Mg(2+). Positions 47 and 71 each coordinate DNA. 5 residues coordinate Mg(2+): Asp87, Glu159, Glu161, Asp180, and Asp182. Residues 123–254 are I-domain; the sequence is EVLKFEKRLV…ATAFKLIKEH (132 aa). Glu159 contacts DNA. DNA-binding residues include Gly232 and Asp234. Asp234 contacts Mg(2+). The tract at residues 339 to 347 is interaction with PCNA; it reads VQGRLDGFF. The segment covering 353 to 366 has biased composition (basic and acidic residues); sequence DDKKRKADPKESKA. Positions 353 to 372 are disordered; that stretch reads DDKKRKADPKESKASKKKKK.

This sequence belongs to the XPG/RAD2 endonuclease family. FEN1 subfamily. As to quaternary structure, interacts with PCNA. Three molecules of RAD27 bind to one PCNA trimer with each molecule binding to one PCNA monomer. PCNA stimulates the nuclease activity without altering cleavage specificity. Mg(2+) is required as a cofactor. Phosphorylated. Phosphorylation upon DNA damage induces relocalization to the nuclear plasma.

Its subcellular location is the nucleus. It localises to the nucleolus. The protein localises to the nucleoplasm. The protein resides in the mitochondrion. In terms of biological role, structure-specific nuclease with 5'-flap endonuclease and 5'-3' exonuclease activities involved in DNA replication and repair. During DNA replication, cleaves the 5'-overhanging flap structure that is generated by displacement synthesis when DNA polymerase encounters the 5'-end of a downstream Okazaki fragment. It enters the flap from the 5'-end and then tracks to cleave the flap base, leaving a nick for ligation. Also involved in the long patch base excision repair (LP-BER) pathway, by cleaving within the apurinic/apyrimidinic (AP) site-terminated flap. Acts as a genome stabilization factor that prevents flaps from equilibrating into structures that lead to duplications and deletions. Also possesses 5'-3' exonuclease activity on nicked or gapped double-stranded DNA, and exhibits RNase H activity. Also involved in replication and repair of rDNA and in repairing mitochondrial DNA. In Candida albicans (strain WO-1) (Yeast), this protein is Flap endonuclease 1.